The chain runs to 1159 residues: WASH complex subunit 5 (1159 aa).

This sequence belongs to the strumpellin family. As to quaternary structure, component of the WASH core complex also described as WASH regulatory complex (SHRC) composed of WASH (WASHC1, WASH2P or WASH3P), WASHC2 (WASHC2A or WASHC2C), WASHC3, WASHC4 and WASHC5. The WASH core complex associates via WASHC2 with the F-actin-capping protein dimer (formed by CAPZA1, CAPZA2 or CAPZA3 and CAPZB) in a transient or substoichiometric manner which was initially described as WASH complex. Interacts with VCP, PI4K2A.

Its subcellular location is the cytoplasm. It is found in the cytosol. The protein localises to the endoplasmic reticulum. It localises to the early endosome. Functionally, acts as a component of the WASH core complex that functions as a nucleation-promoting factor (NPF) at the surface of endosomes, where it recruits and activates the Arp2/3 complex to induce actin polymerization, playing a key role in the fission of tubules that serve as transport intermediates during endosome sorting. May be involved in axonal outgrowth. Involved in cellular localization of ADRB2. Involved in cellular trafficking of BLOC-1 complex cargos such as ATP7A and VAMP7. Involved in cytokinesis and following polar body extrusion during oocyte meiotic maturation. The chain is WASH complex subunit 5 from Mus musculus (Mouse).